Reading from the N-terminus, the 353-residue chain is Lipase chaperone (353 aa).

Residues 12–32 form a helical membrane-spanning segment; the sequence is IVLYLILGCVVVCGVWYSFDV.

Belongs to the lipase chaperone family.

Its subcellular location is the cell inner membrane. Its function is as follows. May be involved in the folding of the extracellular lipase during its passage through the periplasm. This is Lipase chaperone from Xylella fastidiosa (strain M23).